The primary structure comprises 576 residues: Proline--tRNA ligase (576 aa).

Belongs to the class-II aminoacyl-tRNA synthetase family. ProS type 1 subfamily. As to quaternary structure, homodimer.

The protein resides in the cytoplasm. It catalyses the reaction tRNA(Pro) + L-proline + ATP = L-prolyl-tRNA(Pro) + AMP + diphosphate. Functionally, catalyzes the attachment of proline to tRNA(Pro) in a two-step reaction: proline is first activated by ATP to form Pro-AMP and then transferred to the acceptor end of tRNA(Pro). As ProRS can inadvertently accommodate and process non-cognate amino acids such as alanine and cysteine, to avoid such errors it has two additional distinct editing activities against alanine. One activity is designated as 'pretransfer' editing and involves the tRNA(Pro)-independent hydrolysis of activated Ala-AMP. The other activity is designated 'posttransfer' editing and involves deacylation of mischarged Ala-tRNA(Pro). The misacylated Cys-tRNA(Pro) is not edited by ProRS. In Helicobacter pylori (strain J99 / ATCC 700824) (Campylobacter pylori J99), this protein is Proline--tRNA ligase.